A 129-amino-acid chain; its full sequence is Small ribosomal subunit protein uS11 (129 aa).

Belongs to the universal ribosomal protein uS11 family. Part of the 30S ribosomal subunit. Interacts with proteins S7 and S18. Binds to IF-3.

Located on the platform of the 30S subunit, it bridges several disparate RNA helices of the 16S rRNA. Forms part of the Shine-Dalgarno cleft in the 70S ribosome. This chain is Small ribosomal subunit protein uS11, found in Mannheimia succiniciproducens (strain KCTC 0769BP / MBEL55E).